A 413-amino-acid chain; its full sequence is Putative competence-damage inducible protein (413 aa).

Belongs to the CinA family.

This chain is Putative competence-damage inducible protein, found in Lacticaseibacillus casei (strain BL23) (Lactobacillus casei).